A 463-amino-acid chain; its full sequence is Interleukin enhancer-binding factor 2 (463 aa).

R94 carries the asymmetric dimethylarginine; alternate modification. R94 carries the omega-N-methylarginine; alternate modification. The DZF domain maps to 108-444 (RHILAYDWLA…PEKKEGEEEE (337 aa)). R145 is modified (omega-N-methylarginine). Residue K166 forms a Glycyl lysine isopeptide (Lys-Gly) (interchain with G-Cter in ubiquitin) linkage. Phosphoserine is present on residues S173 and S189. Glycyl lysine isopeptide (Lys-Gly) (interchain with G-Cter in SUMO2) cross-links involve residues K259 and K437. Residues 424–463 (VTPSEKAYEKPPEKKEGEEEEENTEEPPQGEEEESMETQE) form a disordered region. Residues 429-440 (KAYEKPPEKKEG) are compositionally biased toward basic and acidic residues. Positions 441–463 (EEEEENTEEPPQGEEEESMETQE) are enriched in acidic residues. Residue T461 is modified to Phosphothreonine.

In terms of assembly, forms heterodimers with ILF3. ILF2-ILF3 heterodimers may also bind to PRKDC/XRCC7: this may stabilize the interaction of PRKDC/XRCC7 and the heterodimeric complex of G22P1/KU70 and XRCC5/KU80. Forms a complex with ILF3, YLPM1, KHDRBS1, RBMX, NCOA5 and PPP1CA. Identified in a IGF2BP1-dependent mRNP granule complex containing untranslated mRNAs. Interacts with IGF2BP1. Interacts with CRBN; this interaction promotes ubiquitination and subsequent degradation of ILF2. Post-translationally, ubiquitinated at Lys-166 by CRBN with polyubiquitin chains by the CUL4-RING E3 ligase (CRL4-CRBN) and then degraded by the proteasome.

It localises to the nucleus. The protein resides in the nucleolus. Its subcellular location is the cytoplasm. Chromatin-interacting protein that forms a stable heterodimer with interleukin enhancer-binding factor 3/ILF3 and plays a role in several biological processes including transcription, innate immunity or cell growth. Essential for the efficient reshuttling of ILF3 (isoform 1 and isoform 2) into the nucleus. Together with ILF3, forms an RNA-binding complex that is required for mitotic progression and cytokinesis by regulating the expression of a cluster of mitotic genes. Mechanistically, competes with STAU1/STAU2-mediated mRNA decay. Plays also a role in the inhibition of various viruses including Japanese encephalitis virus or enterovirus 71. This chain is Interleukin enhancer-binding factor 2 (Ilf2), found in Rattus norvegicus (Rat).